Here is a 93-residue protein sequence, read N- to C-terminus: Large ribosomal subunit protein uL23cy (93 aa).

It belongs to the universal ribosomal protein uL23 family. Part of the 50S ribosomal subunit.

It localises to the plastid. The protein localises to the chloroplast. Functionally, binds to 23S rRNA. The polypeptide is Large ribosomal subunit protein uL23cy (rpl23-B) (Agrostis stolonifera (Creeping bentgrass)).